The following is a 213-amino-acid chain: MSIGILGTKLGMTQIFDESGKAVPVTVIQAGPCPITQIKTVATDGYNAIQIGFLEVREKQLSKPELGHLSKAGAPPLRHLLEYRVPSTDGLELGQALTADRFEAGQKVDVQGHTIGRGFTGYQKRHGFARGPMSHGSKNHRLPGSTGAGTTPGRVYPGKRMAGRSGNDKTTIRGLTVVRVDADRNLLLVKGSVPGKPGALLNITPATVVGQQA.

A disordered region spans residues 131–168 (GPMSHGSKNHRLPGSTGAGTTPGRVYPGKRMAGRSGND).

The protein belongs to the universal ribosomal protein uL3 family. In terms of assembly, part of the 50S ribosomal subunit. Forms a cluster with proteins L14 and L19.

In terms of biological role, one of the primary rRNA binding proteins, it binds directly near the 3'-end of the 23S rRNA, where it nucleates assembly of the 50S subunit. This Synechococcus elongatus (strain ATCC 33912 / PCC 7942 / FACHB-805) (Anacystis nidulans R2) protein is Large ribosomal subunit protein uL3.